A 59-amino-acid chain; its full sequence is Large ribosomal subunit protein bL32 (59 aa).

The segment at 1 to 59 is disordered; the sequence is MAVQQNKKSPSKRGMHRSHDALTAPALFVDSTTGEVHRPHHISPNGMYRGRKVVKAKGE. Over residues 49 to 59 the composition is skewed to basic residues; sequence RGRKVVKAKGE.

Belongs to the bacterial ribosomal protein bL32 family.

This Neisseria gonorrhoeae (strain ATCC 700825 / FA 1090) protein is Large ribosomal subunit protein bL32.